The sequence spans 62 residues: UPF0434 protein FTL_1400 (62 aa).

This sequence belongs to the UPF0434 family.

The protein is UPF0434 protein FTL_1400 of Francisella tularensis subsp. holarctica (strain LVS).